The chain runs to 121 residues: Phosphoribosyl-ATP pyrophosphatase (121 aa).

This sequence belongs to the PRA-PH family.

Its subcellular location is the cytoplasm. The enzyme catalyses 1-(5-phospho-beta-D-ribosyl)-ATP + H2O = 1-(5-phospho-beta-D-ribosyl)-5'-AMP + diphosphate + H(+). It participates in amino-acid biosynthesis; L-histidine biosynthesis; L-histidine from 5-phospho-alpha-D-ribose 1-diphosphate: step 2/9. In Burkholderia multivorans (strain ATCC 17616 / 249), this protein is Phosphoribosyl-ATP pyrophosphatase.